A 580-amino-acid polypeptide reads, in one-letter code: Formate--tetrahydrofolate ligase (580 aa).

Residue 65–72 (TPHGEGKT) participates in ATP binding.

The protein belongs to the formate--tetrahydrofolate ligase family.

It catalyses the reaction (6S)-5,6,7,8-tetrahydrofolate + formate + ATP = (6R)-10-formyltetrahydrofolate + ADP + phosphate. The protein operates within one-carbon metabolism; tetrahydrofolate interconversion. The protein is Formate--tetrahydrofolate ligase of Shewanella baltica (strain OS223).